We begin with the raw amino-acid sequence, 567 residues long: Vacuolar fusion protein MON1 homolog (567 aa).

2 disordered regions span residues 1–52 and 65–129; these read MDMD…DDEG and TSAS…DDTS. A compositionally biased stretch (pro residues) spans 7–19; the sequence is TNNPSPPGPPDSP. The span at 43 to 52 shows a compositional bias: acidic residues; that stretch reads DDYDDDDDEG.

The protein belongs to the MON1/SAND family. As to quaternary structure, interacts with CCZ1A, CCZ1B and RABF2B.

It localises to the endosome. Its subcellular location is the prevacuolar compartment. Plays an important role in membrane trafficking through the secretory apparatus. In complex with CCZ1, acts as a guanine exchange factor (GEF) for Rab7 protein family. Promotes the exchange of GDP to GTP, converting it from an inactive GDP-bound form into an active GTP-bound form. The active form is involved in protein trafficking from prevacuolar compartments (PVCs) to vacuoles. May serve as a linker between Rab5 and Rab7 protein families in PVCs and mediate PVC maturation. This Oryza sativa subsp. japonica (Rice) protein is Vacuolar fusion protein MON1 homolog.